A 438-amino-acid chain; its full sequence is Xylose isomerase (438 aa).

Active-site residues include histidine 103 and aspartate 106. Residues glutamate 234, glutamate 270, histidine 273, aspartate 298, aspartate 309, aspartate 311, and aspartate 341 each coordinate Mg(2+).

This sequence belongs to the xylose isomerase family. Homotetramer. It depends on Mg(2+) as a cofactor.

It is found in the cytoplasm. It catalyses the reaction alpha-D-xylose = alpha-D-xylulofuranose. This Bacteroides thetaiotaomicron (strain ATCC 29148 / DSM 2079 / JCM 5827 / CCUG 10774 / NCTC 10582 / VPI-5482 / E50) protein is Xylose isomerase.